We begin with the raw amino-acid sequence, 336 residues long: MYYPFVRKALFQLDPERAHEVTFQQLRRVTGTPLEMLVRQKVPARPVTCMGLTFKNPLGLAAGLDKNGECIDALGAMGFGSIEIGTVTPRPQPGNDKPRIFRLVDAEGLINRMGFNNHGVDNLVENVKKAHFDGVLGINIGKNKDTPVEHGKDDYLICMEKVYPYAGYIAINISSPNTPGLRTLQYGEALDDLLSGIKNKQLELQQKHQKYVPVAVKIAPDLLPEELIQVADSLVRHNIDGVIATNTTLDRSLVQGMKHCDETGGLSGRPLQLKSTEIIRMLSAELNGRLPIIGVGGIDSVIAAREKIAAGASLVQIYSGFIFKGPPLIKEIVTHI.

FMN-binding positions include A62 to K66 and T86. Substrate is bound at residue K66. N111–F115 contributes to the substrate binding site. FMN contacts are provided by N139 and N172. N172 is a substrate binding site. S175 serves as the catalytic Nucleophile. N177 provides a ligand contact to substrate. K217 and T245 together coordinate FMN. N246 to T247 serves as a coordination point for substrate. FMN-binding positions include G268, G297, and Y318–S319.

This sequence belongs to the dihydroorotate dehydrogenase family. Type 2 subfamily. As to quaternary structure, monomer. The cofactor is FMN.

The protein resides in the cell membrane. The enzyme catalyses (S)-dihydroorotate + a quinone = orotate + a quinol. It participates in pyrimidine metabolism; UMP biosynthesis via de novo pathway; orotate from (S)-dihydroorotate (quinone route): step 1/1. Catalyzes the conversion of dihydroorotate to orotate with quinone as electron acceptor. The polypeptide is Dihydroorotate dehydrogenase (quinone) (Klebsiella pneumoniae (strain 342)).